The sequence spans 266 residues: Ribosomal RNA small subunit methyltransferase A (266 aa).

Positions 16, 18, 43, 64, 89, and 110 each coordinate S-adenosyl-L-methionine.

The protein belongs to the class I-like SAM-binding methyltransferase superfamily. rRNA adenine N(6)-methyltransferase family. RsmA subfamily.

It localises to the cytoplasm. It carries out the reaction adenosine(1518)/adenosine(1519) in 16S rRNA + 4 S-adenosyl-L-methionine = N(6)-dimethyladenosine(1518)/N(6)-dimethyladenosine(1519) in 16S rRNA + 4 S-adenosyl-L-homocysteine + 4 H(+). Functionally, specifically dimethylates two adjacent adenosines (A1518 and A1519) in the loop of a conserved hairpin near the 3'-end of 16S rRNA in the 30S particle. May play a critical role in biogenesis of 30S subunits. In Marinomonas sp. (strain MWYL1), this protein is Ribosomal RNA small subunit methyltransferase A.